Reading from the N-terminus, the 532-residue chain is 2,3-bisphosphoglycerate-independent phosphoglycerate mutase (532 aa).

2 residues coordinate Mn(2+): aspartate 13 and serine 63. Serine 63 (phosphoserine intermediate) is an active-site residue. Substrate-binding positions include histidine 124, 154-155, arginine 187, arginine 193, 262-265, and lysine 343; these read RD and RPDR. Aspartate 421, histidine 425, aspartate 463, histidine 464, and histidine 481 together coordinate Mn(2+).

This sequence belongs to the BPG-independent phosphoglycerate mutase family. In terms of assembly, monomer. Mn(2+) serves as cofactor.

It catalyses the reaction (2R)-2-phosphoglycerate = (2R)-3-phosphoglycerate. The protein operates within carbohydrate degradation; glycolysis; pyruvate from D-glyceraldehyde 3-phosphate: step 3/5. Catalyzes the interconversion of 2-phosphoglycerate and 3-phosphoglycerate. This is 2,3-bisphosphoglycerate-independent phosphoglycerate mutase from Mesoplasma florum (strain ATCC 33453 / NBRC 100688 / NCTC 11704 / L1) (Acholeplasma florum).